Consider the following 130-residue polypeptide: Large ribosomal subunit protein eL32 (130 aa).

At S40 the chain carries Phosphoserine.

It belongs to the eukaryotic ribosomal protein eL32 family. As to quaternary structure, component of the large ribosomal subunit (LSU). Mature yeast ribosomes consist of a small (40S) and a large (60S) subunit. The 40S small subunit contains 1 molecule of ribosomal RNA (18S rRNA) and 33 different proteins (encoded by 57 genes). The large 60S subunit contains 3 rRNA molecules (25S, 5.8S and 5S rRNA) and 46 different proteins (encoded by 81 genes).

The protein localises to the cytoplasm. In terms of biological role, component of the ribosome, a large ribonucleoprotein complex responsible for the synthesis of proteins in the cell. The small ribosomal subunit (SSU) binds messenger RNAs (mRNAs) and translates the encoded message by selecting cognate aminoacyl-transfer RNA (tRNA) molecules. The large subunit (LSU) contains the ribosomal catalytic site termed the peptidyl transferase center (PTC), which catalyzes the formation of peptide bonds, thereby polymerizing the amino acids delivered by tRNAs into a polypeptide chain. The nascent polypeptides leave the ribosome through a tunnel in the LSU and interact with protein factors that function in enzymatic processing, targeting, and the membrane insertion of nascent chains at the exit of the ribosomal tunnel. This chain is Large ribosomal subunit protein eL32, found in Saccharomyces cerevisiae (strain ATCC 204508 / S288c) (Baker's yeast).